The chain runs to 209 residues: A-type ATP synthase subunit D (209 aa).

The protein belongs to the V-ATPase D subunit family. Has multiple subunits with at least A(3), B(3), C, D, E, F, H, I and proteolipid K(x).

It is found in the cell membrane. Its function is as follows. Component of the A-type ATP synthase that produces ATP from ADP in the presence of a proton gradient across the membrane. The polypeptide is A-type ATP synthase subunit D (Sulfolobus acidocaldarius (strain ATCC 33909 / DSM 639 / JCM 8929 / NBRC 15157 / NCIMB 11770)).